The chain runs to 67 residues: Conotoxin VnMMSK-02 (67 aa).

Residues Met1 to Ala20 form the signal peptide. Positions Leu21–Arg52 are excised as a propeptide. The residue at position 53 (Gln53) is a Pyrrolidone carboxylic acid. Intrachain disulfides connect Cys54–Cys66, Cys55–Cys62, and Cys59–Cys65. Residue Pro64 is modified to 4-hydroxyproline. Cys66 carries the cysteine amide modification.

The protein belongs to the conotoxin M superfamily. As to expression, expressed by the venom duct.

The protein localises to the secreted. This is Conotoxin VnMMSK-02 from Conus ventricosus (Mediterranean cone).